We begin with the raw amino-acid sequence, 193 residues long: Superoxide dismutase [Fe] (193 aa).

His-27 is a binding site for Fe cation. Residue Lys-51 is modified to N6-acetyllysine. Fe cation is bound by residues His-74, Asp-157, and His-161.

The protein belongs to the iron/manganese superoxide dismutase family. Homodimer. Requires Fe cation as cofactor.

It catalyses the reaction 2 superoxide + 2 H(+) = H2O2 + O2. Functionally, destroys superoxide anion radicals which are normally produced within the cells and which are toxic to biological systems. In Escherichia coli O157:H7, this protein is Superoxide dismutase [Fe] (sodB).